The primary structure comprises 564 residues: Oxalyl-CoA decarboxylase (564 aa).

Substrate-binding residues include Ile-32 and Tyr-118. ADP is bound by residues Arg-158 and Lys-220. 261–265 (AAARS) lines the substrate pocket. Residues Arg-280, Asp-302, and Ile-322 each contribute to the ADP site. Asn-355 serves as a coordination point for substrate. Thiamine diphosphate is bound by residues Tyr-372 and 396–398 (ANT). Substrate is bound at residue 403–404 (RN). A thiamine diphosphate-binding site is contributed by 421-423 (GVM). Asp-447 contributes to the Mg(2+) binding site. 448-449 (SA) contacts thiamine diphosphate. Residues Asn-474 and Gly-476 each coordinate Mg(2+). Residue Tyr-478 participates in thiamine diphosphate binding. 550–552 (SGH) is a substrate binding site.

The protein belongs to the TPP enzyme family. Homotetramer; dimer of dimers. Mg(2+) serves as cofactor. Requires thiamine diphosphate as cofactor.

The enzyme catalyses oxalyl-CoA + H(+) = formyl-CoA + CO2. The protein operates within metabolic intermediate degradation; oxalate degradation; CO(2) and formate from oxalate: step 2/2. Functionally, involved in the catabolism of oxalate and in the adapatation to low pH via the induction of the oxalate-dependent acid tolerance response (ATR). Catalyzes the decarboxylation of oxalyl-CoA to yield carbon dioxide and formyl-CoA. The chain is Oxalyl-CoA decarboxylase (oxc) from Escherichia coli O157:H7.